A 1265-amino-acid polypeptide reads, in one-letter code: Nestin (1265 aa).

Residues 1–16 (MELLGVRQPFGPQFQE) form a head region. Residues 17-52 (EKYQMLELNHRLESYLGRVKLLEEENKLLREEIHTL) form a coil 1A region. Positions 17–324 (EKYQMLELNH…ALLDSEGLRI (308 aa)) constitute an IF rod domain. Residues 53–64 (KSSRDPAGQRKA) form a linker 1 region. The segment at 65–160 (QEEALSQARR…QVHQENMETM (96 aa)) is coil 1B. Positions 161-183 (QASLKQTKQVLMAPQRVQATSIP) are linker 12. The tract at residues 184-203 (DLGQEYGYKAAQAWQEAANN) is coil 2A. Residues 204-206 (YQK) form a linker 2 region. Residues 207–324 (QVGRLEESLN…ALLDSEGLRI (118 aa)) are coil 2B. Residues 325-1265 (DRPTPNKTSS…EGDSWSSGDE (941 aa)) are tail. A compositionally biased stretch (polar residues) spans 383 to 402 (PSWTLTRGTPQRPPSSTSMT). Disordered stretches follow at residues 383 to 521 (PSWT…TEVS), 667 to 830 (FEVE…PDME), 863 to 1073 (HESL…KASQ), 1093 to 1116 (AQTTHASMDEHSSISPVNENLESS), and 1232 to 1265 (IRDDKQKDGQPAQSKIVQSDDSADEGDSWSSGDE). Residues 403–418 (EKTEDHISEETKRSAE) show a composition bias toward basic and acidic residues. Positions 422 to 441 (DQLQQEKVQQDWTLESTLPK) are enriched in polar residues. A compositionally biased stretch (basic and acidic residues) spans 444-459 (AEPKPELQPEEIKVED). Over residues 479-496 (LTSVPAEQQGSMSQTPET) the composition is skewed to polar residues. 2 stretches are compositionally biased toward acidic residues: residues 508–520 (EVSEDGKDEDTEV) and 730–739 (LNEDQSEAEE). Composition is skewed to basic and acidic residues over residues 784–796 (YKSDEETSHHIGE), 803–819 (EKERIDQGHLNEKRFNT), and 863–897 (HESLDVVVQESERKGNLEKEDSGDADNMRDNKEED). Residues 901–910 (FEQNENQQLT) show a composition bias toward polar residues. Residues 911–935 (EHQHVHTEQVEDKPVHSHETQEHVN) are compositionally biased toward basic and acidic residues. Residues 943-956 (SERSQQEQLEESSL) show a composition bias toward low complexity. Residues 1015-1043 (PNASQCFQNTSLLAAATPNEQPLTFTNEV) are compositionally biased toward polar residues. The segment covering 1061-1070 (SEEKSTDEPK) has biased composition (basic and acidic residues). 2 stretches are compositionally biased toward polar residues: residues 1105 to 1116 (SISPVNENLESS) and 1242 to 1251 (PAQSKIVQSD). Over residues 1252-1265 (DSADEGDSWSSGDE) the composition is skewed to acidic residues.

This sequence belongs to the intermediate filament family. Forms homodimers and homotetramers in vitro. In mixtures with other intermediate filament proteins such as vimentin and alpha-internexin, preferentially forms heterodimers. In terms of tissue distribution, widely expressed throughout the developing nervous system at 24 hours post-fertilization (hpf). As development progresses, expression becomes restricted to proliferative zones of the developing and postembryonic central nervous system. In the peripheral nervous system, expressed in the cranial ganglia. Also expressed in mesodermal muscle precursor cells and in cranial mesenchymal tissue.

In terms of biological role, promotes the disassembly of phosphorylated vimentin intermediate filaments (IF) during mitosis and may play a role in the trafficking and distribution of IF proteins and other cellular factors to daughter cells during progenitor cell division. Required for survival, renewal and mitogen-stimulated proliferation of neural progenitor cells. Required for brain and eye development. In Danio rerio (Zebrafish), this protein is Nestin (nes).